A 311-amino-acid polypeptide reads, in one-letter code: Manganese-dependent inorganic pyrophosphatase (311 aa).

The Mn(2+) site is built by H10, D14, D16, D75, H97, and D149.

It belongs to the PPase class C family. In terms of assembly, homodimer. The cofactor is Mn(2+).

The enzyme catalyses diphosphate + H2O = 2 phosphate + H(+). The protein is Manganese-dependent inorganic pyrophosphatase (ppaC) of Methanothrix thermoacetophila (strain DSM 6194 / JCM 14653 / NBRC 101360 / PT) (Methanosaeta thermophila).